Here is a 250-residue protein sequence, read N- to C-terminus: 2,3-bisphosphoglycerate-dependent phosphoglycerate mutase (250 aa).

Residues 10 to 17 (RHGESQWN), 23 to 24 (TG), Arg-62, 89 to 92 (ERHY), Lys-100, 116 to 117 (RR), and 185 to 186 (GN) contribute to the substrate site. Residue His-11 is the Tele-phosphohistidine intermediate of the active site. Glu-89 serves as the catalytic Proton donor/acceptor.

Belongs to the phosphoglycerate mutase family. BPG-dependent PGAM subfamily. As to quaternary structure, homodimer.

It catalyses the reaction (2R)-2-phosphoglycerate = (2R)-3-phosphoglycerate. It participates in carbohydrate degradation; glycolysis; pyruvate from D-glyceraldehyde 3-phosphate: step 3/5. Its function is as follows. Catalyzes the interconversion of 2-phosphoglycerate and 3-phosphoglycerate. In Escherichia coli O139:H28 (strain E24377A / ETEC), this protein is 2,3-bisphosphoglycerate-dependent phosphoglycerate mutase.